A 535-amino-acid polypeptide reads, in one-letter code: Dynein axonemal assembly factor 8 (535 aa).

Disordered stretches follow at residues 112–215, 228–267, 344–380, 395–444, and 461–535; these read AELA…QERR, RDAC…EGPP, PADT…QGMR, TVPP…LRSC, and IAQP…LDQL. Positions 125–139 are enriched in basic and acidic residues; sequence RTKDASSQEGRDPGR. A compositionally biased stretch (polar residues) spans 166–175; that stretch reads GSLSFNTKGS. Ser-175 is modified (phosphoserine). At Ser-362 the chain carries Phosphoserine. Positions 415-424 are enriched in acidic residues; sequence DSEEEEEEVE. Polar residues predominate over residues 435–444; sequence SPSSLGLRSC.

Its subcellular location is the dynein axonemal particle. The protein resides in the cytoplasm. Functionally, in cyliated cells, dynein axonemal particle-specific protein required for deployment of ODA to the axoneme. Interacts with outer dynein arm (ODA) subunits. In Macaca fascicularis (Crab-eating macaque), this protein is Dynein axonemal assembly factor 8 (DNAAF8).